A 366-amino-acid polypeptide reads, in one-letter code: Ribosomal RNA large subunit methyltransferase M (366 aa).

S-adenosyl-L-methionine contacts are provided by residues S188, C221–G224, D240, D260, and D277. The active-site Proton acceptor is K306.

The protein belongs to the class I-like SAM-binding methyltransferase superfamily. RNA methyltransferase RlmE family. RlmM subfamily. Monomer.

Its subcellular location is the cytoplasm. It catalyses the reaction cytidine(2498) in 23S rRNA + S-adenosyl-L-methionine = 2'-O-methylcytidine(2498) in 23S rRNA + S-adenosyl-L-homocysteine + H(+). Catalyzes the 2'-O-methylation at nucleotide C2498 in 23S rRNA. This is Ribosomal RNA large subunit methyltransferase M from Klebsiella pneumoniae (strain 342).